Reading from the N-terminus, the 466-residue chain is 3-isopropylmalate dehydratase large subunit (466 aa).

[4Fe-4S] cluster-binding residues include C349, C410, and C413.

Belongs to the aconitase/IPM isomerase family. LeuC type 1 subfamily. As to quaternary structure, heterodimer of LeuC and LeuD. The cofactor is [4Fe-4S] cluster.

The enzyme catalyses (2R,3S)-3-isopropylmalate = (2S)-2-isopropylmalate. It functions in the pathway amino-acid biosynthesis; L-leucine biosynthesis; L-leucine from 3-methyl-2-oxobutanoate: step 2/4. Catalyzes the isomerization between 2-isopropylmalate and 3-isopropylmalate, via the formation of 2-isopropylmaleate. The polypeptide is 3-isopropylmalate dehydratase large subunit (Vesicomyosocius okutanii subsp. Calyptogena okutanii (strain HA)).